Reading from the N-terminus, the 390-residue chain is MLKVKLSLPPDSTFLSQLIYESLLYLSGKKLAKFENGELLIESISKALETFDDERVGEIRIVMSGNDNINAKIFETFGIGGVKSRKTYYDLIALLKEHRDKISTKDESEIHLNIKGKDVFMDINSKSDGIAAPQLLKVDRYTGFSSLDTPYTSQQLTFYLSKEVALLALLGIYSSFVTNVRQQQQSYYYFLFFSPEEVAGLLNSPSLAEKFFLVKESVRESLRELLRRTTFNELLLIETTLNLELQRLMETENLDKISLTLFKIAHEGQTYKIYEQIPITVYRNPAFYETAKKYFRDPLKFSEKLRKAITQGVIPSALAILSTKNKYSEADNILKAIQMLYRFVVLGDLQGWFGFLRELNNAHSKLKNSSDGREKKRAGQYLNIVKEVAW.

This is an uncharacterized protein from Archaeoglobus fulgidus (strain ATCC 49558 / DSM 4304 / JCM 9628 / NBRC 100126 / VC-16).